A 121-amino-acid polypeptide reads, in one-letter code: Structural protein p14.5 (121 aa).

Disordered regions lie at residues 1-24 and 84-121; these read MADFNSPIQYLKEDSRDRTSIGSL and TSLVPEETDNKPEDDEESGAKPKKKKHLFPKLSSHKSK. The residue at position 2 (alanine 2) is an N-acetylalanine; by host. The segment covering 104-121 has biased composition (basic residues); it reads KPKKKKHLFPKLSSHKSK.

Belongs to the asfivirus structural protein p14.5 family. Interacts with the major capsid protein. Interacts with host IRF3; this interaction interferes with the recruitment of IRF3 to TBK1. Post-translationally, acetylated.

It is found in the virion. In terms of biological role, structural protein required for transport of intracellular particles from the assembly sites to the plasma membrane. Binds to both ssDNA and dsDNA. Suppressed the activation of the cGAS/STING pathway by interfering with the recruitment of IRF3 to TBK1, which in turn suppresses IRF3 phosphorylation, decreasing interferon production. This Ornithodoros (relapsing fever ticks) protein is Structural protein p14.5.